The primary structure comprises 343 residues: GTPase Obg (343 aa).

Residues 1 to 158 form the Obg domain; it reads MFIDEAKIRV…FTLRLELKVL (158 aa). Residues 121–140 form a disordered region; sequence RGGRGNQHFATSTHQAPREH. The region spanning 159–333 is the OBG-type G domain; sequence ADIGIVGYPN…LKYAMAERVR (175 aa). GTP is bound by residues 165 to 172, 190 to 194, 215 to 218, 286 to 289, and 314 to 316; these read GYPNVGKS, FTTLE, DIPG, SKID, and SAV. Serine 172 and threonine 192 together coordinate Mg(2+).

Belongs to the TRAFAC class OBG-HflX-like GTPase superfamily. OBG GTPase family. Monomer. The cofactor is Mg(2+).

It localises to the cytoplasm. In terms of biological role, an essential GTPase which binds GTP, GDP and possibly (p)ppGpp with moderate affinity, with high nucleotide exchange rates and a fairly low GTP hydrolysis rate. Plays a role in control of the cell cycle, stress response, ribosome biogenesis and in those bacteria that undergo differentiation, in morphogenesis control. The sequence is that of GTPase Obg from Acidobacterium capsulatum (strain ATCC 51196 / DSM 11244 / BCRC 80197 / JCM 7670 / NBRC 15755 / NCIMB 13165 / 161).